Here is a 379-residue protein sequence, read N- to C-terminus: Protein-glutamate methylesterase/protein-glutamine glutaminase (379 aa).

The region spanning 4–121 (KVLVVDDSSF…AKNSDEAGSL (118 aa)) is the Response regulatory domain. Aspartate 55 is subject to 4-aspartylphosphate. A CheB-type methylesterase domain is found at 185-379 (SGKEYKLLAI…ASMVKEISRG (195 aa)). Catalysis depends on residues serine 197, histidine 224, and aspartate 321.

The protein belongs to the CheB family. In terms of processing, phosphorylated by CheA. Phosphorylation of the N-terminal regulatory domain activates the methylesterase activity.

It localises to the cytoplasm. It catalyses the reaction [protein]-L-glutamate 5-O-methyl ester + H2O = L-glutamyl-[protein] + methanol + H(+). The catalysed reaction is L-glutaminyl-[protein] + H2O = L-glutamyl-[protein] + NH4(+). Its function is as follows. Involved in chemotaxis. Part of a chemotaxis signal transduction system that modulates chemotaxis in response to various stimuli. Catalyzes the demethylation of specific methylglutamate residues introduced into the chemoreceptors (methyl-accepting chemotaxis proteins or MCP) by CheR. Also mediates the irreversible deamidation of specific glutamine residues to glutamic acid. The sequence is that of Protein-glutamate methylesterase/protein-glutamine glutaminase from Colwellia psychrerythraea (strain 34H / ATCC BAA-681) (Vibrio psychroerythus).